We begin with the raw amino-acid sequence, 504 residues long: Cytochrome P450 3A11 (504 aa).

Cys443 provides a ligand contact to heme.

Belongs to the cytochrome P450 family. Heme serves as cofactor. As to expression, highly expressed in liver.

The protein localises to the endoplasmic reticulum membrane. Its subcellular location is the microsome membrane. It carries out the reaction an organic molecule + reduced [NADPH--hemoprotein reductase] + O2 = an alcohol + oxidized [NADPH--hemoprotein reductase] + H2O + H(+). In terms of biological role, catalyzes erythromycin N-demethylation, nifedipine oxidation and testosterone 6 beta-hydroxylation. The sequence is that of Cytochrome P450 3A11 (Cyp3a11) from Mus musculus (Mouse).